Consider the following 250-residue polypeptide: Agamous-like MADS-box protein AGL8 homolog (250 aa).

Residues 3–57 (RGRVQLKRIENKINRQVTFSKRRSGLLKKAHEISVLCDAEVGLIVFSTKGKLFEY) enclose the MADS-box domain. Residues 88–178 (PGSWTLEHAK…SKKVKEREKE (91 aa)) enclose the K-box domain.

Abundant in vegetative organs.

It localises to the nucleus. Its function is as follows. Probable transcription factor. The chain is Agamous-like MADS-box protein AGL8 homolog from Solanum tuberosum (Potato).